The sequence spans 802 residues: Protein enabled homolog (802 aa).

The WH1 domain occupies 1–111 (MSEQSICQAR…SAMMHALEVL (111 aa)). Residues 143–155 (NSQLPAQVQNGPS) show a composition bias toward polar residues. Residues 143–166 (NSQLPAQVQNGPSQEELEIQRRQL) form a disordered region. Phosphoserine is present on S144. The stretch at 154–258 (PSQEELEIQR…ERERRMSNAA (105 aa)) forms a coiled coil. Repeat copies occupy residues 175–179 (LERER), 180–184 (MERER), 185–189 (LERER), 190–194 (LERER), 195–199 (LERER), 200–204 (LEQEQ), and 205–209 (LERQR). The 7 X 5 AA tandem repeats of [LM]-E-[QR]-[EQ]-[QR] stretch occupies residues 175–209 (LERERMERERLERERLERERLERERLEQEQLERQR). Over residues 245-254 (QVEWERERRM) the composition is skewed to basic and acidic residues. Disordered stretches follow at residues 245–287 (QVEW…PSYA) and 341–622 (ATVP…RPLT). S255 carries the phosphoserine; by PKA modification. Low complexity predominate over residues 255–278 (SNAAPSSDSSLSSAPLPEYSSCQP). Positions 348–361 (NKNSRPSSPVNTPS) are enriched in polar residues. Position 383 is a phosphoserine (S383). The span at 386 to 410 (IMISSPPGKATGPRPVLPVCVSSPV) shows a compositional bias: low complexity. Residues 431 to 464 (VSPPPTSGPAAPPPPPPPPPPPPPPPLPPPPLPP) are compositionally biased toward pro residues. Positions 485-505 (STPSSKPSVLPSPSAGAPASA) are enriched in low complexity. Positions 525–535 (AASQPAESPTP) are enriched in polar residues. Over residues 542–553 (PPAPPPPPPLPS) the composition is skewed to pro residues. Y557 bears the Phosphotyrosine mark. Residues 561–605 (LPPPPGPPPPPPLPSTGPPPPPPPPPPLPNQAPPPPPPPPAPPLP) are compositionally biased toward pro residues. An EVH2 block A region spans residues 623-643 (GLAAAIAGAKLRKVSRVEDGS). Positions 623–799 (GLAAAIAGAK…DAIRQELSKS (177 aa)) are EVH2. The KLKR motif lies at 632–635 (KLRK). 2 disordered regions span residues 639–675 (VEDGSFPGGGNTGSVSLASSKADAGRGNGPLPLGGSG) and 691–764 (AEKG…TEGL). Over residues 664-675 (RGNGPLPLGGSG) the composition is skewed to gly residues. The tract at residues 674 to 691 (SGLMEEMSALLARRRRIA) is EVH2 block B. Polar residues predominate over residues 731–760 (RTNTMNGSKSPVISRPKSTPSSQPSANGVQ). 2 positions are modified to phosphoserine: S738 and S740. Residues 765 to 799 (DYDRLKQDILDEMRKELAKLKEELIDAIRQELSKS) are EVH2 block C. A coiled-coil region spans residues 767–797 (DRLKQDILDEMRKELAKLKEELIDAIRQELS).

The protein belongs to the Ena/VASP family. In terms of assembly, homotetramer. Interacts with APBB1IP, APBB1, PFN1 and ROBO4. Isoforms, containing the polyproline-rich regions with PPLP motifs, bind the WW domain of APBB1IP. Isoforms, containing the PPSY motif, bind, in vitro, to the WW2 and WW3 domains of NEDD4 and to the WW1 domain of YAP1. Binds the SH3 domain of BAIAP2-alpha but only after the autoinhibitory region of BAIAP2-alpha has been blocked by interaction with CDC42. Interacts, via the EVH1/WH1 domain, with the Pro-rich domains from VCL, ZYX and Listeria monocytogenes actA and with TES (via LIM domain). The TES LIM domain and the Pro-rich domains from VCL or ZYX compete for the same binding site. Interaction with ZYX is important for targeting ENAH to focal adhesions and enhances production of actin-rich structures at the apical surface of cells. Binds GPHN. Heterotrimer with TES and ACTL7A. Interacts with FAT1 (via EVH1 domains). Interacts, through the Pro-rich region, with the C-terminal SH3 domain of DNMPB. Interacts with PRPF40A. NTN1-induced PKA phosphorylation on Ser-255 directly parallels the formation of filopodial protrusions. As to expression, expressed in heart and testis, lower levels in lung, skeletal muscle, kidney, pancreas and brain. Isoform 5 is expressed exclusively in the brain. Isoform 2 is expressed predominantly in brain, testis, ovary and fat. In the brain, isoforms 2 and 5 are expressed at highest levels in the hippocampus, cortex and midbrain, and at lowest levels in the striatum and cerebellum. Isoform 6 is expressed in brain and spleen.

Its subcellular location is the cytoplasm. The protein resides in the cytoskeleton. It localises to the cell projection. The protein localises to the lamellipodium. It is found in the filopodium. Its subcellular location is the synapse. The protein resides in the cell junction. It localises to the focal adhesion. In terms of biological role, ena/VASP proteins are actin-associated proteins involved in a range of processes dependent on cytoskeleton remodeling and cell polarity such as axon guidance and lamellipodial and filopodial dynamics in migrating cells. ENAH induces the formation of F-actin rich outgrowths in fibroblasts. Acts synergistically with BAIAP2-alpha and downstream of NTN1 to promote filipodia formation. This Mus musculus (Mouse) protein is Protein enabled homolog (Enah).